Here is a 119-residue protein sequence, read N- to C-terminus: V-type proton ATPase subunit F (119 aa).

The protein belongs to the V-ATPase F subunit family. In terms of assembly, V-ATPase is a heteromultimeric enzyme made up of two complexes: the ATP-hydrolytic V1 complex and the proton translocation V0 complex. The V1 complex consists of three catalytic AB heterodimers that form a heterohexamer, three peripheral stalks each consisting of EG heterodimers, one central rotor including subunits D and F, and the regulatory subunits C and H. The proton translocation complex V0 consists of the proton transport subunit a, a ring of proteolipid subunits c9c'', rotary subunit d, subunits e and f, and the accessory subunits ATP6AP1/Ac45 and ATP6AP2/PRR.

It localises to the cytoplasmic vesicle. The protein resides in the secretory vesicle. Its subcellular location is the synaptic vesicle membrane. The protein localises to the clathrin-coated vesicle membrane. Its function is as follows. Subunit of the V1 complex of vacuolar(H+)-ATPase (V-ATPase), a multisubunit enzyme composed of a peripheral complex (V1) that hydrolyzes ATP and a membrane integral complex (V0) that translocates protons. V-ATPase is responsible for acidifying and maintaining the pH of intracellular compartments and in some cell types, is targeted to the plasma membrane, where it is responsible for acidifying the extracellular environment. The protein is V-type proton ATPase subunit F (Atp6v1f) of Mus musculus (Mouse).